The following is a 215-amino-acid chain: 16S rRNA (adenine(1408)-N(1))-methyltransferase (215 aa).

S-adenosyl-L-methionine contacts are provided by residues Gly32, Asp55, 87-88 (AE), 102-107 (LMPWGS), and 191-193 (TSW).

Belongs to the methyltransferase superfamily. Kanamycin-apramycin resistance family.

It catalyses the reaction adenosine(1408) in 16S rRNA + S-adenosyl-L-methionine = N(1)-methyladenosine(1408) in 16S rRNA + S-adenosyl-L-homocysteine + H(+). Functionally, specifically methylates the N(1) position of adenine 1408 in 16S rRNA. Confers resistance to various aminoglycosides, including kanamycin, neomycin and apramycin. In Streptoalloteichus tenebrarius (strain ATCC 17920 / DSM 40477 / JCM 4838 / CBS 697.72 / NBRC 16177 / NCIMB 11028 / NRRL B-12390 / A12253. 1 / ISP 5477) (Streptomyces tenebrarius), this protein is 16S rRNA (adenine(1408)-N(1))-methyltransferase (kamB).